Here is a 429-residue protein sequence, read N- to C-terminus: Glutamate-1-semialdehyde 2,1-aminomutase (429 aa).

K265 carries the N6-(pyridoxal phosphate)lysine modification.

Belongs to the class-III pyridoxal-phosphate-dependent aminotransferase family. HemL subfamily. As to quaternary structure, homodimer. Pyridoxal 5'-phosphate is required as a cofactor.

It is found in the cytoplasm. It carries out the reaction (S)-4-amino-5-oxopentanoate = 5-aminolevulinate. Its pathway is porphyrin-containing compound metabolism; protoporphyrin-IX biosynthesis; 5-aminolevulinate from L-glutamyl-tRNA(Glu): step 2/2. The polypeptide is Glutamate-1-semialdehyde 2,1-aminomutase (Ectopseudomonas mendocina (strain ymp) (Pseudomonas mendocina)).